Here is a 370-residue protein sequence, read N- to C-terminus: Proto-oncogene Wnt-1 (370 aa).

An N-terminal signal peptide occupies residues 1-27 (MGLWALLPGWVSATLLLALAALPAALA). The N-linked (GlcNAc...) asparagine glycan is linked to asparagine 29. 11 cysteine pairs are disulfide-bonded: cysteine 93–cysteine 104, cysteine 143–cysteine 151, cysteine 153–cysteine 170, cysteine 218–cysteine 232, cysteine 220–cysteine 227, cysteine 299–cysteine 330, cysteine 315–cysteine 325, cysteine 329–cysteine 369, cysteine 345–cysteine 360, cysteine 347–cysteine 357, and cysteine 352–cysteine 353. Serine 224 is lipidated: O-palmitoleoyl serine; by PORCN. N-linked (GlcNAc...) asparagine glycosylation is found at asparagine 316 and asparagine 346. Asparagine 359 carries an N-linked (GlcNAc...) asparagine glycan.

Belongs to the Wnt family. In terms of assembly, forms a soluble 1:1 complex with AFM; this prevents oligomerization and is required for prolonged biological activity. The complex with AFM may represent the physiological form in body fluids. Interacts with PORCN. Interacts with RSPO1, RSPO2 and RSPO3. Interacts with WLS. Post-translationally, palmitoleoylation is required for efficient binding to frizzled receptors. Palmitoleoylation is necessary for proper trafficking to cell surface. Depalmitoleoylated by NOTUM, leading to inhibit Wnt signaling pathway.

Its subcellular location is the secreted. It is found in the extracellular space. The protein resides in the extracellular matrix. Functionally, ligand for members of the frizzled family of seven transmembrane receptors. Acts in the canonical Wnt signaling pathway by promoting beta-catenin-dependent transcriptional activation. In some developmental processes, is also a ligand for the coreceptor RYK, thus triggering Wnt signaling. Plays an essential role in the development of the embryonic brain and central nervous system (CNS). Has a role in osteoblast function, bone development and bone homeostasis. The protein is Proto-oncogene Wnt-1 (WNT1) of Homo sapiens (Human).